The primary structure comprises 417 residues: MDKLIIKGGKKLAGEVTVSGSKNASLPIFISTILAPAEHEISNVPFLRDINTTIKVLEQLGAKVDGNGNIVKIDTTGVDNFEATYELVKTMRASVLVLGPLLARFGKARVSLPGGCAIGARPINLHLKGLAAMGADINLTHGYVEAKAKQLKGARINFDVSTVGGTEHLMMAAATAKGETILENAAREPEIVDLANVLTKMGARIDGAGTDTIRISGVKELGPVSHRVMPDRIEAGTFMIAAAITGGDIKVRNMQLEHLDALVFKLQDAGVEIINKDNVVRVKGPRKIKGVNIKTRPYPGFPTDMQAQFMALMCLADSASVISENIFENRFMHVSELMRFGADITTEGNTATVKGVKKLSGAPVMATDLRASACLILAGLAADNTTEVSRIYHLDRGYESIEKKLAGLGADIVRVQE.

A phosphoenolpyruvate-binding site is contributed by 22 to 23; sequence KN. A UDP-N-acetyl-alpha-D-glucosamine-binding site is contributed by Arg-92. Cys-116 (proton donor) is an active-site residue. The residue at position 116 (Cys-116) is a 2-(S-cysteinyl)pyruvic acid O-phosphothioketal. 2 residues coordinate UDP-N-acetyl-alpha-D-glucosamine: Asp-304 and Ile-326.

Belongs to the EPSP synthase family. MurA subfamily.

It localises to the cytoplasm. It carries out the reaction phosphoenolpyruvate + UDP-N-acetyl-alpha-D-glucosamine = UDP-N-acetyl-3-O-(1-carboxyvinyl)-alpha-D-glucosamine + phosphate. It participates in cell wall biogenesis; peptidoglycan biosynthesis. Cell wall formation. Adds enolpyruvyl to UDP-N-acetylglucosamine. The chain is UDP-N-acetylglucosamine 1-carboxyvinyltransferase from Geotalea uraniireducens (strain Rf4) (Geobacter uraniireducens).